We begin with the raw amino-acid sequence, 96 residues long: Co-chaperonin GroES (96 aa).

The protein belongs to the GroES chaperonin family. As to quaternary structure, heptamer of 7 subunits arranged in a ring. Interacts with the chaperonin GroEL.

The protein resides in the cytoplasm. Functionally, together with the chaperonin GroEL, plays an essential role in assisting protein folding. The GroEL-GroES system forms a nano-cage that allows encapsulation of the non-native substrate proteins and provides a physical environment optimized to promote and accelerate protein folding. GroES binds to the apical surface of the GroEL ring, thereby capping the opening of the GroEL channel. The sequence is that of Co-chaperonin GroES from Leptothrix cholodnii (strain ATCC 51168 / LMG 8142 / SP-6) (Leptothrix discophora (strain SP-6)).